Reading from the N-terminus, the 223-residue chain is Ribose-5-phosphate isomerase A (223 aa).

Residues 32–35, 85–88, and 98–101 contribute to the substrate site; these read TGST, DGAD, and KGGG. The active-site Proton acceptor is glutamate 107. Lysine 125 provides a ligand contact to substrate.

This sequence belongs to the ribose 5-phosphate isomerase family. Homodimer.

The enzyme catalyses aldehydo-D-ribose 5-phosphate = D-ribulose 5-phosphate. Its pathway is carbohydrate degradation; pentose phosphate pathway; D-ribose 5-phosphate from D-ribulose 5-phosphate (non-oxidative stage): step 1/1. Functionally, catalyzes the reversible conversion of ribose-5-phosphate to ribulose 5-phosphate. In Stutzerimonas stutzeri (strain A1501) (Pseudomonas stutzeri), this protein is Ribose-5-phosphate isomerase A.